We begin with the raw amino-acid sequence, 346 residues long: Golgi to ER traffic protein 4 (346 aa).

Residues 317–346 (GQNQGGSRRTPQGRSQSKTVEAPPASMELD) form a disordered region. The span at 321-335 (GGSRRTPQGRSQSKT) shows a compositional bias: polar residues.

It belongs to the GET4 family. As to quaternary structure, component of the get4/get5/sgt2 sorting complex.

The protein localises to the cytoplasm. Its function is as follows. Component of the get4/get5/sgt2 sorting complex involved in the GET (guided entry of TA proteins) pathway that leads to the insertion of tail-anchored (TA) proteins into the endoplasmic reticulum. Get4 and get5 form an obligate complex that catalyzes the transfer of tail-anchored proteins destined to the endoplasmic reticulum from sgt2 to the cytosolic targeting factor which then targets the TA protein to the ER membrane via get1/get2. This chain is Golgi to ER traffic protein 4, found in Aspergillus fumigatus (strain ATCC MYA-4609 / CBS 101355 / FGSC A1100 / Af293) (Neosartorya fumigata).